Reading from the N-terminus, the 384-residue chain is S-adenosylmethionine synthase (384 aa).

His-15 is a binding site for ATP. Asp-17 contacts Mg(2+). Glu-43 is a binding site for K(+). Glu-56 and Gln-99 together coordinate L-methionine. A flexible loop region spans residues 99 to 109 (QSPDINQGVDR). ATP is bound by residues 164 to 166 (DAK), 230 to 231 (RF), Asp-239, 245 to 246 (RK), Ala-262, and Lys-266. Asp-239 lines the L-methionine pocket. Lys-270 provides a ligand contact to L-methionine.

The protein belongs to the AdoMet synthase family. In terms of assembly, homotetramer; dimer of dimers. The cofactor is Mg(2+). It depends on K(+) as a cofactor.

It localises to the cytoplasm. It carries out the reaction L-methionine + ATP + H2O = S-adenosyl-L-methionine + phosphate + diphosphate. It functions in the pathway amino-acid biosynthesis; S-adenosyl-L-methionine biosynthesis; S-adenosyl-L-methionine from L-methionine: step 1/1. Functionally, catalyzes the formation of S-adenosylmethionine (AdoMet) from methionine and ATP. The overall synthetic reaction is composed of two sequential steps, AdoMet formation and the subsequent tripolyphosphate hydrolysis which occurs prior to release of AdoMet from the enzyme. The polypeptide is S-adenosylmethionine synthase (Klebsiella pneumoniae (strain 342)).